A 146-amino-acid polypeptide reads, in one-letter code: Large ribosomal subunit protein uL15 (146 aa).

A compositionally biased stretch (basic and acidic residues) spans 1-13; the sequence is MKLHELKAAEGSR. Positions 1 to 56 are disordered; that stretch reads MKLHELKAAEGSRRVRNRVGRGAATGNGKTSGRGQKGQKARSGGKLRPGFEGGQLP. The segment covering 23 to 35 has biased composition (gly residues); sequence AATGNGKTSGRGQ.

Belongs to the universal ribosomal protein uL15 family. As to quaternary structure, part of the 50S ribosomal subunit.

Binds to the 23S rRNA. This chain is Large ribosomal subunit protein uL15, found in Staphylococcus epidermidis (strain ATCC 35984 / DSM 28319 / BCRC 17069 / CCUG 31568 / BM 3577 / RP62A).